The chain runs to 211 residues: Pyrrolidone-carboxylate peptidase 1 (211 aa).

Active-site residues include glutamate 79, cysteine 142, and histidine 164.

It belongs to the peptidase C15 family. In terms of assembly, homotetramer.

The protein resides in the cytoplasm. It catalyses the reaction Release of an N-terminal pyroglutamyl group from a polypeptide, the second amino acid generally not being Pro.. Functionally, removes 5-oxoproline from various penultimate amino acid residues except L-proline. This Saccharolobus solfataricus (strain ATCC 35092 / DSM 1617 / JCM 11322 / P2) (Sulfolobus solfataricus) protein is Pyrrolidone-carboxylate peptidase 1 (pcp1).